Reading from the N-terminus, the 136-residue chain is Beta-hordothionin (136 aa).

The first 27 residues, 1-27 (MGSKGLKGVMVCLLILGLVLEHVQVEG), serve as a signal peptide directing secretion. Disulfide bonds link Cys30-Cys66, Cys31-Cys58, Cys39-Cys56, and Cys43-Cys52. The propeptide at 73–136 (LALVSNSDEP…GDVGLTSLTA (64 aa)) is acidic domain.

Belongs to the plant thionin (TC 1.C.44) family. 4 C-C subfamily. As to quaternary structure, homodimer.

The protein localises to the secreted. Thionins are small plant proteins which are toxic to animal cells. They seem to exert their toxic effect at the level of the cell membrane. Their precise function is not known. The protein is Beta-hordothionin (THI1.2) of Hordeum vulgare (Barley).